Here is a 341-residue protein sequence, read N- to C-terminus: MEEELKNFIIVWISAIISVSYCYYISANIKTGVLRLFSVLPICGLFFVLPLFFSSVHFSSSTAFYLSEMASLKLILFAFDQGPLFPVAPNLIQFVCFTCFPIKLQRNPKSQPSQNHFHKRAFAIKIMIFGVVLHVYNYSHFLPQTVLLSLCFLHLYVELEILLGPLKVLLSMALGCDLEPQFNKPYLATSLQDFWGRRWNLMVSSVLRSGIYNPVRCACQRPMNSGWARFMGYLVTFLVSGLFHELVYFYITRETPTWEVTLFFVLNGVCTGTEVAVKRTAFLQRWWPVRSSVSRLLTMGFVVVTGGLLFFPLFIRSGMMERRANETLFFLDFVKRKFSIF.

The next 7 membrane-spanning stretches (helical) occupy residues 9–29 (IIVWISAIISVSYCYYISANI), 36–56 (LFSVLPICGLFFVLPLFFSSV), 82–102 (GPLFPVAPNLIQFVCFTCFPI), 122–142 (FAIKIMIFGVVLHVYNYSHFL), 146–166 (VLLSLCFLHLYVELEILLGPL), 231–251 (MGYLVTFLVSGLFHELVYFYI), and 295–315 (RLLTMGFVVVTGGLLFFPLFI).

The protein belongs to the wax synthase family.

The protein resides in the membrane. The catalysed reaction is a long chain fatty alcohol + a fatty acyl-CoA = a wax ester + CoA. In terms of biological role, catalyzes the final step in the synthesis of long-chain linear esters (waxes). The polypeptide is Probable long-chain-alcohol O-fatty-acyltransferase 9 (Arabidopsis thaliana (Mouse-ear cress)).